Consider the following 1041-residue polypeptide: FHIP family protein CG3558 (1041 aa).

Residue Ser-490 is modified to Phosphoserine. Disordered regions lie at residues 619 to 648 (RPAD…SSSL), 792 to 818 (KGNE…QGQL), 858 to 879 (SMFS…SASS), 903 to 947 (DGRG…SNSS), and 959 to 986 (SNTT…SEPA). Residues 628-637 (TDTTVATTAS) show a composition bias toward polar residues. A Phosphoserine modification is found at Ser-797. Residues 800–818 (HHSQQQQMVTNSGQQQGQL) are compositionally biased toward polar residues. Residues 903–925 (DGRGISQAQTSAGTCETSLSTQP) are compositionally biased toward polar residues. A compositionally biased stretch (low complexity) spans 927 to 947 (AGASRTGANATSTAASGSNSS). Polar residues predominate over residues 959–968 (SNTTTHSAST).

It belongs to the FHIP family.

In Drosophila melanogaster (Fruit fly), this protein is FHIP family protein CG3558.